Reading from the N-terminus, the 274-residue chain is 2,3,4,5-tetrahydropyridine-2,6-dicarboxylate N-succinyltransferase (274 aa).

The protein belongs to the transferase hexapeptide repeat family.

The protein resides in the cytoplasm. The catalysed reaction is (S)-2,3,4,5-tetrahydrodipicolinate + succinyl-CoA + H2O = (S)-2-succinylamino-6-oxoheptanedioate + CoA. The protein operates within amino-acid biosynthesis; L-lysine biosynthesis via DAP pathway; LL-2,6-diaminopimelate from (S)-tetrahydrodipicolinate (succinylase route): step 1/3. The chain is 2,3,4,5-tetrahydropyridine-2,6-dicarboxylate N-succinyltransferase from Erwinia tasmaniensis (strain DSM 17950 / CFBP 7177 / CIP 109463 / NCPPB 4357 / Et1/99).